The primary structure comprises 613 residues: Dihydroxy-acid dehydratase 3 (613 aa).

Aspartate 81 lines the Mg(2+) pocket. Cysteine 122 is a [2Fe-2S] cluster binding site. Mg(2+) contacts are provided by aspartate 123 and lysine 124. Lysine 124 is subject to N6-carboxylysine. Cysteine 197 is a [2Fe-2S] cluster binding site. Glutamate 493 lines the Mg(2+) pocket. Residue serine 519 is the Proton acceptor of the active site.

Belongs to the IlvD/Edd family. Homodimer. [2Fe-2S] cluster serves as cofactor. Mg(2+) is required as a cofactor.

The enzyme catalyses (2R)-2,3-dihydroxy-3-methylbutanoate = 3-methyl-2-oxobutanoate + H2O. The catalysed reaction is (2R,3R)-2,3-dihydroxy-3-methylpentanoate = (S)-3-methyl-2-oxopentanoate + H2O. It participates in amino-acid biosynthesis; L-isoleucine biosynthesis; L-isoleucine from 2-oxobutanoate: step 3/4. Its pathway is amino-acid biosynthesis; L-valine biosynthesis; L-valine from pyruvate: step 3/4. Functionally, functions in the biosynthesis of branched-chain amino acids. Catalyzes the dehydration of (2R,3R)-2,3-dihydroxy-3-methylpentanoate (2,3-dihydroxy-3-methylvalerate) into 2-oxo-3-methylpentanoate (2-oxo-3-methylvalerate) and of (2R)-2,3-dihydroxy-3-methylbutanoate (2,3-dihydroxyisovalerate) into 2-oxo-3-methylbutanoate (2-oxoisovalerate), the penultimate precursor to L-isoleucine and L-valine, respectively. The sequence is that of Dihydroxy-acid dehydratase 3 from Nocardia farcinica (strain IFM 10152).